Consider the following 768-residue polypeptide: Translation initiation factor IF-2, chloroplastic (768 aa).

Disordered stretches follow at residues 1–20 (MFLNNQNFENRSSRSSSNIN), 54–77 (KSESHTGGEQHLELSSPPKLDKKS), and 155–176 (KKVAVTPSQNSASIQSNSPPES). Basic and acidic residues predominate over residues 54 to 65 (KSESHTGGEQHL). Positions 160–176 (TPSQNSASIQSNSPPES) are enriched in polar residues. A tr-type G domain is found at 261–434 (KRPPIVTVMG…TLLAELEDLK (174 aa)). Residues 270–277 (GHVDHGKT), 320–324 (DTPGH), and 374–377 (SKID) contribute to the GTP site.

It belongs to the TRAFAC class translation factor GTPase superfamily. Classic translation factor GTPase family. IF-2 subfamily.

The protein resides in the plastid. Its subcellular location is the chloroplast. In terms of biological role, one of the essential components for the initiation of protein synthesis. Protects formylmethionyl-tRNA from spontaneous hydrolysis and promotes its binding to the 30S ribosomal subunits. Also involved in the hydrolysis of GTP during the formation of the 70S ribosomal complex. This Pyropia yezoensis (Susabi-nori) protein is Translation initiation factor IF-2, chloroplastic (infB).